The chain runs to 261 residues: Calcium-binding protein 8 (261 aa).

Residues 1-41 (MRLPEQPGDGKPENETKGDQETPERGEEPRRSPAPDFPTWE) are disordered. Residues 1–234 (MRLPEQPGDG…QNRQTCVRKS (234 aa)) are Cytoplasmic-facing. A compositionally biased stretch (basic and acidic residues) spans 8–33 (GDGKPENETKGDQETPERGEEPRRSP). 2 consecutive EF-hand domains span residues 78-113 (EELD…LGYM) and 114-149 (PSEV…KLVS). Ca(2+)-binding residues include Asp-91, Asp-93, Asn-95, Glu-102, Asp-127, Asp-129, Asp-131, Gln-133, and Glu-138. The chain crosses the membrane as a helical; Anchor for type IV membrane protein span at residues 235 to 255 (LICAFAMAFIISVMLIAANQI). The Extracellular segment spans residues 256–261 (LRSGME).

As to quaternary structure, interacts with PI4KB. This binding competes with FREQ/NCS1 binding in a calcium-dependent manner. Brain-specific. High expression in the cerebellum, hippocampus, and cortex.

It localises to the golgi apparatus. The protein resides in the trans-Golgi network membrane. Its subcellular location is the cytoplasm. It is found in the perinuclear region. The protein localises to the cell membrane. Negatively regulates Golgi-to-plasma membrane trafficking by interacting with PI4KB and inhibiting its activity. May play a role in the physiology of neurons and is potentially important in memory and learning. The chain is Calcium-binding protein 8 (Caln1) from Mus musculus (Mouse).